A 301-amino-acid polypeptide reads, in one-letter code: Tetratricopeptide repeat domain-containing protein PYG7, chloroplastic (301 aa).

Residues 1–61 constitute a chloroplast transit peptide; the sequence is MFESNMVLQT…FHDYVFAEIS (61 aa). The next 2 helical transmembrane spans lie at 82 to 102 and 121 to 141; these read TFLL…AAAA and IQLS…FYVI. TPR repeat units lie at residues 168-201, 206-239, and 240-273; these read ATEL…WDGD, AQVY…QPGY, and VTAW…DPNN.

As to quaternary structure, interacts with PSA3.

It is found in the plastid. The protein localises to the chloroplast thylakoid membrane. In terms of biological role, nuclear genome-encoded factor required for the accumulation of photosystem I (PSI). Functions as a PSI biogenesis factor. Cooperates with PSA3 to promote the stable assembly of PSI in the thylakoid membrane. May target primarily the PsaC subunit. This Arabidopsis thaliana (Mouse-ear cress) protein is Tetratricopeptide repeat domain-containing protein PYG7, chloroplastic.